Here is a 217-residue protein sequence, read N- to C-terminus: Outer-membrane lipoprotein LolB (217 aa).

Positions 1–20 are cleaved as a signal peptide; the sequence is MSKTVRTLALGGLVLAGLSA. A lipid anchor (N-palmitoyl cysteine) is attached at Cys21. Cys21 carries the S-diacylglycerol cysteine lipid modification. Residues 105-124 form a disordered region; sequence DTTSGAGRLEGLEGGPRSGP.

The protein belongs to the LolB family. As to quaternary structure, monomer.

The protein resides in the cell outer membrane. Functionally, plays a critical role in the incorporation of lipoproteins in the outer membrane after they are released by the LolA protein. This is Outer-membrane lipoprotein LolB from Xanthomonas axonopodis pv. citri (strain 306).